Consider the following 64-residue polypeptide: Large ribosomal subunit protein bL28 (64 aa).

This sequence belongs to the bacterial ribosomal protein bL28 family.

This chain is Large ribosomal subunit protein bL28 (rpmB), found in Mycobacterium leprae (strain TN).